Here is a 299-residue protein sequence, read N- to C-terminus: Protoheme IX farnesyltransferase (299 aa).

The next 9 membrane-spanning stretches (helical) occupy residues 17–37 (VVAL…PAPY), 41–61 (GLLV…AAVF), 91–111 (ALMW…LFVN), 113–133 (ITMV…TLYL), 141–161 (IVIG…AVSG), 168–188 (ACLL…ALAI), 207–227 (GLAY…LVSL), 228–248 (LPYL…ALGI), and 266–286 (IAWC…VTLL).

Belongs to the UbiA prenyltransferase family. Protoheme IX farnesyltransferase subfamily.

It is found in the cell inner membrane. It carries out the reaction heme b + (2E,6E)-farnesyl diphosphate + H2O = Fe(II)-heme o + diphosphate. Its pathway is porphyrin-containing compound metabolism; heme O biosynthesis; heme O from protoheme: step 1/1. Functionally, converts heme B (protoheme IX) to heme O by substitution of the vinyl group on carbon 2 of heme B porphyrin ring with a hydroxyethyl farnesyl side group. This Ruthia magnifica subsp. Calyptogena magnifica protein is Protoheme IX farnesyltransferase.